The sequence spans 216 residues: Imidazole glycerol phosphate synthase subunit HisH (216 aa).

Residues 2-216 form the Glutamine amidotransferase type-1 domain; sequence RVAIIDYGSG…LISNFLRWKP (215 aa). Cys-88 (nucleophile) is an active-site residue. Active-site residues include His-196 and Glu-198.

As to quaternary structure, heterodimer of HisH and HisF.

The protein resides in the cytoplasm. The enzyme catalyses 5-[(5-phospho-1-deoxy-D-ribulos-1-ylimino)methylamino]-1-(5-phospho-beta-D-ribosyl)imidazole-4-carboxamide + L-glutamine = D-erythro-1-(imidazol-4-yl)glycerol 3-phosphate + 5-amino-1-(5-phospho-beta-D-ribosyl)imidazole-4-carboxamide + L-glutamate + H(+). It carries out the reaction L-glutamine + H2O = L-glutamate + NH4(+). Its pathway is amino-acid biosynthesis; L-histidine biosynthesis; L-histidine from 5-phospho-alpha-D-ribose 1-diphosphate: step 5/9. Its function is as follows. IGPS catalyzes the conversion of PRFAR and glutamine to IGP, AICAR and glutamate. The HisH subunit catalyzes the hydrolysis of glutamine to glutamate and ammonia as part of the synthesis of IGP and AICAR. The resulting ammonia molecule is channeled to the active site of HisF. This is Imidazole glycerol phosphate synthase subunit HisH from Rhizobium meliloti (strain 1021) (Ensifer meliloti).